Consider the following 142-residue polypeptide: Large ribosomal subunit protein uL13 (142 aa).

This sequence belongs to the universal ribosomal protein uL13 family. Part of the 50S ribosomal subunit.

This protein is one of the early assembly proteins of the 50S ribosomal subunit, although it is not seen to bind rRNA by itself. It is important during the early stages of 50S assembly. This chain is Large ribosomal subunit protein uL13, found in Vibrio atlanticus (strain LGP32) (Vibrio splendidus (strain Mel32)).